A 539-amino-acid chain; its full sequence is Probable 1,4-beta-D-glucan cellobiohydrolase B (539 aa).

Residues 1–26 (MLPSTISYRIYKNALFFAALFGAVQA) form the signal peptide. The interval 27–461 (QKVGTSKAEV…SNIKVGPIGS (435 aa)) is catalytic. N-linked (GlcNAc...) asparagine glycosylation occurs at Asn90. The active-site Nucleophile is the Glu238. The active-site Proton donor is Glu243. Asn296 and Asn495 each carry an N-linked (GlcNAc...) asparagine glycan. The tract at residues 462–503 (TFNSGGSNPGGSTTTTKPATSTTTTKATTTATTNTTGPTGTG) is thr-rich linker. Low complexity predominate over residues 462–503 (TFNSGGSNPGGSTTTTKPATSTTTTKATTTATTNTTGPTGTG). The disordered stretch occupies residues 462–504 (TFNSGGSNPGGSTTTTKPATSTTTTKATTTATTNTTGPTGTGV). The CBM1 domain occupies 503-539 (GVAQPWAQCGGIGYSGPTQCAAPYTCTKQNDYYSQCL). Disulfide bonds link Cys511–Cys528 and Cys522–Cys538.

It belongs to the glycosyl hydrolase 7 (cellulase C) family.

It is found in the secreted. The enzyme catalyses Hydrolysis of (1-&gt;4)-beta-D-glucosidic linkages in cellulose and cellotetraose, releasing cellobiose from the non-reducing ends of the chains.. Functionally, the biological conversion of cellulose to glucose generally requires three types of hydrolytic enzymes: (1) Endoglucanases which cut internal beta-1,4-glucosidic bonds; (2) Exocellobiohydrolases that cut the disaccharide cellobiose from the non-reducing end of the cellulose polymer chain; (3) Beta-1,4-glucosidases which hydrolyze the cellobiose and other short cello-oligosaccharides to glucose. This is Probable 1,4-beta-D-glucan cellobiohydrolase B (cbhB) from Aspergillus clavatus (strain ATCC 1007 / CBS 513.65 / DSM 816 / NCTC 3887 / NRRL 1 / QM 1276 / 107).